The primary structure comprises 304 residues: Phytol kinase 1, chloroplastic (304 aa).

The N-terminal 59 residues, M1–S59, are a transit peptide targeting the chloroplast. A run of 6 helical transmembrane segments spans residues V71–L91, L105–T125, Y129–I149, E167–W187, P191–G211, and W227–Y247.

Belongs to the polyprenol kinase family.

The protein resides in the plastid. It is found in the chloroplast membrane. The catalysed reaction is phytol + CTP = phytyl phosphate + CDP + H(+). The protein operates within cofactor biosynthesis; tocopherol biosynthesis. Kinase involved in the activation and reutilization of phytol from chlorophyll degradation in plant metabolism, including tocopherol biosynthesis. Catalyzes the conversion of phytol to phytol monophosphate (PMP) in the presence of CTP or UTP. No activity with ATP or GTP as phosphoryl donor. The sequence is that of Phytol kinase 1, chloroplastic from Arabidopsis thaliana (Mouse-ear cress).